The chain runs to 517 residues: MSVAAKKIQDLQKKKEKIALGGGIKRIEKQHASGKMTARERLAYLFDEGTFVEMDAFVQHRCTNFGMDKQDLPSESVVTGYGMVDGRVVYAFSQDFTVTGGALGEMHAKKICKAMDMAGKVGAPVVGLNDSGGARIQEAVDALSGYGDIFYRNSIYSGVVPQISAILGPCAGGAVYSPALTDFIFMVDQTSQMFITGPQVIKTVTGEEVTAEQLGGAMTHNSTSGCAQFISQDDKACIDDIRRLISFLPSNNMEKAPEFGCEDDLNIQFPELDALMPDNPNKAYNMFDVITKIVDNGDYMEYQPHYSKNIITCFARVNGKSVGIIANQPQVMAGCLDIDSGDKCAKFIRTCDAFNIPLLTIVDVPGFLPGVTQEYGGIIRHGAKILYAYSEATVPKVTLITRKAYGGAYVAMCSKSLGADVVLAWPTAEIAVMGPAGAVNIIFRKDIKDAKDPAATTKQKLDEYTTEFANPYQAARRGLVDDVIEPKTSRQRIVDAFNMLEGKREKLPAKKHGNIPL.

Positions 4-260 constitute a CoA carboxyltransferase N-terminal domain; it reads AAKKIQDLQK…NNMEKAPEFG (257 aa). The region spanning 271–513 is the CoA carboxyltransferase C-terminal domain; the sequence is ELDALMPDNP…REKLPAKKHG (243 aa).

It belongs to the AccD/PCCB family. The methylmalonyl-CoA decarboxylase is composed of four subunits: the carboxyltransferase alpha subunit (MmdA), the tunnel beta subunit (MmdB), the biotin-containing gamma subunit (MmdC) and the delta subunit (MmdD).

Its subcellular location is the cell membrane. It carries out the reaction (S)-methylmalonyl-CoA + Na(+)(in) + H(+)(out) = propanoyl-CoA + Na(+)(out) + CO2. Carboxyltransferase subunit of the sodium ion pump methylmalonyl-CoA decarboxylase, which converts the chemical energy of a decarboxylation reaction into an electrochemical gradient of Na(+) ions across the cytoplasmic membrane, thereby creating a sodium ion motive force that is used for ATP synthesis. The alpha subunit catalyzes the Na(+)-independent carboxyltransfer from methylmalonyl-CoA to the prosthetic biotin group located on the gamma subunit. The polypeptide is Methylmalonyl-CoA decarboxylase subunit alpha (Propionigenium modestum).